We begin with the raw amino-acid sequence, 513 residues long: Tryptophan--tRNA ligase 1 (513 aa).

A 'HIGH' region motif is present at residues 86-94 (PTGDPHIGH). Positions 393 to 397 (KMSSS) match the 'KMSKS' region motif.

It belongs to the class-I aminoacyl-tRNA synthetase family.

It is found in the cytoplasm. It catalyses the reaction tRNA(Trp) + L-tryptophan + ATP = L-tryptophyl-tRNA(Trp) + AMP + diphosphate + H(+). The polypeptide is Tryptophan--tRNA ligase 1 (Halobacterium salinarum (strain ATCC 700922 / JCM 11081 / NRC-1) (Halobacterium halobium)).